The chain runs to 36 residues: Serine protease inhibitor 2 (36 aa).

The 36-residue stretch at 1–36 (EISCEPGTTFQDKCNTCRCGKDGKSAAGCTLKACPQ) folds into the Pacifastin domain. Disulfide bonds link cysteine 4–cysteine 19, cysteine 14–cysteine 34, and cysteine 17–cysteine 29.

Belongs to the protease inhibitor I19 family. In terms of tissue distribution, expressed in hemolymph.

It is found in the secreted. In terms of biological role, probable serine protease inhibitor. This is Serine protease inhibitor 2 from Melanoplus sanguinipes (Migratory grasshopper).